A 1096-amino-acid polypeptide reads, in one-letter code: Cation-transporting ATPase 5 (1096 aa).

Over 1 to 19 the chain is Cytoplasmic; sequence MDSIELKQLVPENDSEPGT. The chain crosses the membrane as a helical span at residues 20–41; sequence PRQLLFQHYDISNEETIGIKPF. Residues 42-47 are Lumenal-facing; sequence KSIPAK. Residues 48–70 traverse the membrane as a helical segment; the sequence is VYILRVTEILTLGLLHLILTWLP. The Cytoplasmic portion of the chain corresponds to 71-193; it reads EFRLKWIEAP…LVSTKKSIVT (123 aa). Residues 194–216 form a helical membrane-spanning segment; it reads ILLNEVLHPFYLFQAVSVLIWLC. Over 217 to 220 the chain is Lumenal; the sequence is DSFV. Residues 221–238 traverse the membrane as a helical segment; it reads FYSCCIVFISSYSIFLSV. The Cytoplasmic portion of the chain corresponds to 239–391; that stretch reads KESKESENRI…NLRPSQLYLD (153 aa). Residues 392 to 412 form a helical membrane-spanning segment; that stretch reads SMSFLKTMAILSFVSIVFIAI. At 413–425 the chain is on the lumenal side; the sequence is YLNLYNASFGHVV. A helical membrane pass occupies residues 426-447; that stretch reads LRSLDVLTILVPPALPATLSVG. Over 448-895 the chain is Cytoplasmic; it reads IANSIARLSR…SLILSHRCFQ (448 aa). The active-site 4-aspartylphosphate intermediate is the Asp-480. Asp-838 and Asp-842 together coordinate Mg(2+). Residues 896–915 form a helical membrane-spanning segment; that stretch reads YMVLCAIVQFSGVFFLYLKN. Residues 916 to 922 are Lumenal-facing; that stretch reads YNFNDNQ. A helical transmembrane segment spans residues 923 to 940; the sequence is FLFMDLLIIFPLSAAMSY. The Cytoplasmic segment spans residues 941–958; sequence FDPAQNLTSNRPNSTLFG. The helical transmembrane segment at 959–982 threads the bilayer; sequence KGRVKDLGIQSVLIWLSHGLLTLI. The Lumenal portion of the chain corresponds to 983–1003; that stretch reads LHELNWVELPEWQLEKSNTKN. The helical transmembrane segment at 1004–1026 threads the bilayer; it reads VLVTSIFLLSSLQYLGICIGINQ. Over 1027–1040 the chain is Cytoplasmic; the sequence is SSEFLSPIWKKKTY. A helical transmembrane segment spans residues 1041-1060; sequence VCLCTTIGLCNIYLCFANEN. The Lumenal portion of the chain corresponds to 1061-1075; it reads HIISRCLQITRLPTL. The helical transmembrane segment at 1076-1096 threads the bilayer; the sequence is YRFIILFMGVISCCLTSILNM.

It belongs to the cation transport ATPase (P-type) (TC 3.A.3) family. Type V subfamily.

The protein localises to the endoplasmic reticulum membrane. Its subcellular location is the golgi apparatus membrane. The catalysed reaction is ATP + H2O = ADP + phosphate + H(+). Plays a role in regulating calcium and manganese homeostasis responsible for cell cycle progression. This Schizosaccharomyces pombe (strain 972 / ATCC 24843) (Fission yeast) protein is Cation-transporting ATPase 5 (cta5).